Reading from the N-terminus, the 669-residue chain is DNA mismatch repair protein MutL (669 aa).

Residues 356 to 377 (FEQRQNTENNQEKTFSSEESNS) form a disordered region. The span at 361-377 (NTENNQEKTFSSEESNS) shows a compositional bias: polar residues.

It belongs to the DNA mismatch repair MutL/HexB family.

Its function is as follows. This protein is involved in the repair of mismatches in DNA. It is required for dam-dependent methyl-directed DNA mismatch repair. May act as a 'molecular matchmaker', a protein that promotes the formation of a stable complex between two or more DNA-binding proteins in an ATP-dependent manner without itself being part of a final effector complex. The protein is DNA mismatch repair protein MutL of Staphylococcus aureus (strain MSSA476).